The primary structure comprises 72 residues: Small ribosomal subunit protein bS18 (72 aa).

Belongs to the bacterial ribosomal protein bS18 family. Part of the 30S ribosomal subunit. Forms a tight heterodimer with protein bS6.

In terms of biological role, binds as a heterodimer with protein bS6 to the central domain of the 16S rRNA, where it helps stabilize the platform of the 30S subunit. This Aquifex aeolicus (strain VF5) protein is Small ribosomal subunit protein bS18.